Consider the following 212-residue polypeptide: Large ribosomal subunit protein uL3 (212 aa).

The tract at residues 127-161 (NFKRGPMAHGSKNHRLPGSTGAGTTPGRVFPGKRM) is disordered.

This sequence belongs to the universal ribosomal protein uL3 family. In terms of assembly, part of the 50S ribosomal subunit. Forms a cluster with proteins L14 and L19.

In terms of biological role, one of the primary rRNA binding proteins, it binds directly near the 3'-end of the 23S rRNA, where it nucleates assembly of the 50S subunit. In Thermosynechococcus vestitus (strain NIES-2133 / IAM M-273 / BP-1), this protein is Large ribosomal subunit protein uL3.